The chain runs to 498 residues: MRINPTTSGPGVSTLEKKNLGRISQIIGPVLDVAFPPGKMPNIYNALVVKGRDTIGQEINVTCEVQQLLGNNRVRAVAMSATDGLMRGMEVIDTGAPLSVPVGGATLGRIFNVLGEPVDDLGPVDTRTTSPIHRSAPAFIQLDTKLSIFETGIKVVDLLAPYRRGGKIGLFGGAGVGKTVLIMELINNIAKAHGGVSVFGGVGERTREGNDLYMEMKESGVINEQNIAESKVALVYGQMNEPPGARMRVGLTALTMAEYFRDVNEQDVLLFIDNIFRFVQAGSEVSALLGRMPSAVGYQPTLSTEMGTLQERITSTKEGSITSIQAVYVPADDLTDPAPATTFAHLDATTVLSRGLAAKGIYPAVDPLDSTSTMLQPRIVGEEHYETAQRVKQTLQRYKELQDIIAILGLDELSEEDRLTVARARKIERFLSQPFFVAEVFTGSPGKYVGLAETIRGFKLILSGELDGLPEQAFYLVGNIDEATAKATNLEMESKLKK.

172 to 179 (GGAGVGKT) is a binding site for ATP.

The protein belongs to the ATPase alpha/beta chains family. In terms of assembly, F-type ATPases have 2 components, CF(1) - the catalytic core - and CF(0) - the membrane proton channel. CF(1) has five subunits: alpha(3), beta(3), gamma(1), delta(1), epsilon(1). CF(0) has four main subunits: a(1), b(1), b'(1) and c(9-12).

Its subcellular location is the plastid. The protein localises to the chloroplast thylakoid membrane. It carries out the reaction ATP + H2O + 4 H(+)(in) = ADP + phosphate + 5 H(+)(out). Its function is as follows. Produces ATP from ADP in the presence of a proton gradient across the membrane. The catalytic sites are hosted primarily by the beta subunits. The protein is ATP synthase subunit beta, chloroplastic of Eucalyptus globulus subsp. globulus (Tasmanian blue gum).